The chain runs to 867 residues: Nitrate reductase [NADPH] (867 aa).

Residues 38–58 (DIPLPPPSKEPTEVLSIDKPT) are disordered. Cys-152 contacts Mo-molybdopterin. The region spanning 514–589 (NRIIDLQEFK…MPDYHIGTMD (76 aa)) is the Cytochrome b5 heme-binding domain. The heme site is built by His-549 and His-572. The FAD-binding FR-type domain maps to 615–726 (KSWTKATLVK…KGPTGRFEYL (112 aa)). FAD-binding positions include 669 to 672 (RSYT), 686 to 690 (LVKIY), Phe-691, 700 to 702 (KMT), and Thr-753. 837–846 (MVLICGPEAM) contacts NADP(+).

The protein belongs to the nitrate reductase family. In terms of assembly, homodimer. FAD serves as cofactor. It depends on heme as a cofactor. Mo-molybdopterin is required as a cofactor.

It catalyses the reaction nitrite + NADP(+) + H2O = nitrate + NADPH + H(+). Functionally, nitrate reductase is a key enzyme involved in the first step of nitrate assimilation in plants, fungi and bacteria. The protein is Nitrate reductase [NADPH] (niaD) of Aspergillus niger.